The primary structure comprises 711 residues: Polyribonucleotide nucleotidyltransferase (711 aa).

Residues D494 and D500 each contribute to the Mg(2+) site. In terms of domain architecture, KH spans 560–620 (PKIEIFGVDP…INVENAKSDI (61 aa)). Residues 651-710 (GEEFDGVVKKIMDFGAFISLKDGIDGLLHVSKIKTQLSEGDTLRVKVEEIKRGKISLELC) form the S1 motif domain.

This sequence belongs to the polyribonucleotide nucleotidyltransferase family. Mg(2+) serves as cofactor.

The protein localises to the cytoplasm. It catalyses the reaction RNA(n+1) + phosphate = RNA(n) + a ribonucleoside 5'-diphosphate. Its function is as follows. Involved in mRNA degradation. Catalyzes the phosphorolysis of single-stranded polyribonucleotides processively in the 3'- to 5'-direction. The protein is Polyribonucleotide nucleotidyltransferase of Campylobacter hominis (strain ATCC BAA-381 / DSM 21671 / CCUG 45161 / LMG 19568 / NCTC 13146 / CH001A).